Reading from the N-terminus, the 792-residue chain is MSVRTFCQVHLGAVPPERRGSQVSAGQLSDFDMCAQSLIDFLKVRVGWDVRANAMAGRLWHQIMEARCPATLKQYLGIFRGVLGHRVESFIQKNIDALEDMLCAYRRSKAYEDTLNCGYLSAVRLYDTYVLRTMGTEPVYESVAQMFMRVSVFVACQCLEHECLYWLARDLIEDAKSVSEMAIVEYVFGYLAAQHVCCATPILRSAGVEGGQLASCFILQPSMMNEPGTLDALYHDMSPLLASKSGVGLDVTSFSHQKNIASCLKLVDAQVHYFNDNNIRPVGASAYMELWHSQICDFLNAKLPENPDRCHSLFQGVCIPTLFFRMYEKDPSKLWYLFDPATAPNLIKLYGAAFDNEYERLVRAGKYVSCMPLKSMMFTLIHTIIKTGSPYVLLKEALNEHHWTDTQGMAINCSNLCAEIVQLPGRNTSVCNLANICLPKCLRTVESARVGTTDANRPFFCFEALGDAVRVAVLVINACILGGSHPTPGVERGQKERSMGIGVQGLADVFAELGYGYLDAESAELDKNIFQSMYYTAVETSHNLVLEGQGVPFHGWEVSNFAKGRFHWQTWEGEDASFVPRHRWDALGKSIAEHGIFNSQFLAVMPTAGTSQVTGYAESVYPFFANISSKVTNKEEVLRPNVTFFKKVLPDDLRVVRQYGGDVSTFPKHHRERYRVFLTAFDYCPFKLLDRARARAPFVDQSQSMSFFLKEDRVRNASYLRDLLLHGYRLGLKTLMYYCRVQKQSSLTALQCLADPGSPPHSGMKQDGAWLPGPKNPEEESCAADPECLVCQ.

Substrate-binding positions include Thr200, 215–216, Gly246, 415–419, and 606–610; these read SC, NLCAE, and PTAGT. Cys216 and Cys431 are joined by a disulfide. Asn415 acts as the Proton acceptor in catalysis. The active-site Cysteine radical intermediate is Cys417. Glu419 acts as the Proton acceptor in catalysis. The interval 758–781 is disordered; that stretch reads SPPHSGMKQDGAWLPGPKNPEEES.

Belongs to the ribonucleoside diphosphate reductase large chain family. In terms of assembly, heterotetramer composed of a homodimer of the large subunit (R1) and a homodimer of the small subunit (R2). Larger multisubunit protein complex are also active, composed of (R1)n(R2)n.

It catalyses the reaction a 2'-deoxyribonucleoside 5'-diphosphate + [thioredoxin]-disulfide + H2O = a ribonucleoside 5'-diphosphate + [thioredoxin]-dithiol. In terms of biological role, ribonucleoside-diphosphate reductase holoenzyme provides the precursors necessary for viral DNA synthesis. Allows virus growth in non-dividing cells, as well as reactivation from latency in infected hosts. Catalyzes the biosynthesis of deoxyribonucleotides from the corresponding ribonucleotides. This is Ribonucleoside-diphosphate reductase large subunit from Human herpesvirus 8 type P (isolate GK18) (HHV-8).